The sequence spans 631 residues: Phosphomethylpyrimidine synthase (631 aa).

Substrate-binding positions include N239, M268, Y297, H333, 353–355 (SRG), 394–397 (DGLR), and E433. Position 437 (H437) interacts with Zn(2+). Y460 serves as a coordination point for substrate. H501 serves as a coordination point for Zn(2+). [4Fe-4S] cluster is bound by residues C581, C584, and C589.

It belongs to the ThiC family. Homodimer. It depends on [4Fe-4S] cluster as a cofactor.

It catalyses the reaction 5-amino-1-(5-phospho-beta-D-ribosyl)imidazole + S-adenosyl-L-methionine = 4-amino-2-methyl-5-(phosphooxymethyl)pyrimidine + CO + 5'-deoxyadenosine + formate + L-methionine + 3 H(+). It functions in the pathway cofactor biosynthesis; thiamine diphosphate biosynthesis. Functionally, catalyzes the synthesis of the hydroxymethylpyrimidine phosphate (HMP-P) moiety of thiamine from aminoimidazole ribotide (AIR) in a radical S-adenosyl-L-methionine (SAM)-dependent reaction. In Salmonella arizonae (strain ATCC BAA-731 / CDC346-86 / RSK2980), this protein is Phosphomethylpyrimidine synthase.